The following is a 548-amino-acid chain: Tripartite motif-containing protein 55 (548 aa).

The RING-type zinc-finger motif lies at 10–66 (FSKEQQTMDNLEKQLICPICLEMFTKPVVILPCQHNLCRKCASDIFQASNPYLPTRG). The segment at 103–145 (NIIDIYKQESTRPEKKSDQPMCEEHEEERINIYCLNCEVPTCS) adopts a B box-type zinc-finger fold. Zn(2+)-binding residues include Cys-124, His-127, Cys-147, and His-153. The stretch at 168–248 (QKSELSDGIA…EKLEHVRALI (81 aa)) forms a coiled coil. Positions 269-327 (MDEPEMAVFLQNAKTLLKKISEASKAFQMEKIEHGYENMNHFTVNLNREEKIIREIDFY) constitute a COS domain. Positions 326-532 (FYREDEDEEE…PASGSGADSE (207 aa)) are disordered. Composition is skewed to acidic residues over residues 328–339 (REDEDEEEEEGG) and 347–360 (GEVG…EEVE). Low complexity-rich tracts occupy residues 484-496 (VAAA…AAVS) and 512-531 (EAPP…GADS).

In terms of assembly, homooligomer and heterooligomer. Interacts with titin/TTN. Interacts with myosins. Interacts with SQSTM1 and NBR1. Isoform 4 may not able to interact with isoform 1, isoform 2 and isoform 3. Probably interacts with TRIM63 and TRIM54. In terms of processing, targeted for degradation through the proteasomal and lysosomal pathways in the presence of SUMO3. As to expression, highly expressed in muscle. Low-level expression in liver.

It is found in the nucleus. Its subcellular location is the cytoplasm. The enzyme catalyses S-ubiquitinyl-[E2 ubiquitin-conjugating enzyme]-L-cysteine + [acceptor protein]-L-lysine = [E2 ubiquitin-conjugating enzyme]-L-cysteine + N(6)-ubiquitinyl-[acceptor protein]-L-lysine.. Functionally, E3 ubiquitin ligase that plays an important role in regulating cardiac development and contractility, muscle growth, metabolism, and fiber-type differentiation. Acts as a critical factor that regulates cardiomyocyte size during development in concert with TRIM63 by regulating E2F1-mediated gene expression. Plays a role in apoptosis induction in cardiomyocytes by promoting ubiquitination of the DUSP1 phosphatase. Promotes non-canonical NF-kappa-B signaling and B-cell-mediated immune responses by mediating NFKB2 'Lys-48'-linked ubiquitination and processing. In turn, NFKB2 is further processed by valosin-containing protein/VCP, an ATPase that mediates ubiquitin-dependent protein degradation by the proteasome. May play a role in preventing macrophages from producing inflammatory factors and migrating by downregulating the level of nuclear NF-kappa-B subunit RELA. Also modifies PPARG via polyubiquitination and accelerates PPARG proteasomal degradation to inhibit its activity. This Homo sapiens (Human) protein is Tripartite motif-containing protein 55 (TRIM55).